Reading from the N-terminus, the 327-residue chain is Undecaprenyl-phosphate 4-deoxy-4-formamido-L-arabinose transferase (327 aa).

Transmembrane regions (helical) follow at residues 236–256 (LSIF…LLVV) and 270–290 (VFML…GMGL).

The protein belongs to the glycosyltransferase 2 family.

The protein resides in the cell inner membrane. It carries out the reaction UDP-4-deoxy-4-formamido-beta-L-arabinose + di-trans,octa-cis-undecaprenyl phosphate = 4-deoxy-4-formamido-alpha-L-arabinopyranosyl di-trans,octa-cis-undecaprenyl phosphate + UDP. The protein operates within glycolipid biosynthesis; 4-amino-4-deoxy-alpha-L-arabinose undecaprenyl phosphate biosynthesis; 4-amino-4-deoxy-alpha-L-arabinose undecaprenyl phosphate from UDP-4-deoxy-4-formamido-beta-L-arabinose and undecaprenyl phosphate: step 1/2. Its pathway is bacterial outer membrane biogenesis; lipopolysaccharide biosynthesis. In terms of biological role, catalyzes the transfer of 4-deoxy-4-formamido-L-arabinose from UDP to undecaprenyl phosphate. The modified arabinose is attached to lipid A and is required for resistance to polymyxin and cationic antimicrobial peptides. The protein is Undecaprenyl-phosphate 4-deoxy-4-formamido-L-arabinose transferase of Klebsiella pneumoniae subsp. pneumoniae (strain ATCC 700721 / MGH 78578).